Reading from the N-terminus, the 342-residue chain is Guanine nucleotide-binding protein alpha-9 subunit (342 aa).

The N-myristoyl glycine moiety is linked to residue Gly2. Residue Cys3 is the site of S-palmitoyl cysteine attachment. The G-alpha domain occupies 28-342 (REIKLLLLGS…IIQSILKLHY (315 aa)). Residues 31-44 (KLLLLGSGDSGKST) form a G1 motif region. GTP is bound by residues 36–43 (GSGDSGKS), 167–173 (LRCRQRT), 192–196 (DVGGQ), 261–264 (NKND), and Ala316. Positions 43 and 173 each coordinate Mg(2+). Residues 165–173 (DVLRCRQRT) are G2 motif. The segment at 188–197 (FRLIDVGGQK) is G3 motif. A G4 motif region spans residues 257–264 (VLFLNKND). The tract at residues 314–319 (TTATDT) is G5 motif.

This sequence belongs to the G-alpha family. In terms of assembly, g proteins are composed of 3 units; alpha, beta and gamma. The alpha chain contains the guanine nucleotide binding site.

Functionally, guanine nucleotide-binding proteins (G proteins) are involved as modulators or transducers in various transmembrane signaling systems. G alpha-9 antagonizes broad chemotactic response. It functions rapidly following receptor stimulation to negatively regulate PI3K/PTEN, adenylyl cyclase, and guanylyl cyclase pathways. The protein is Guanine nucleotide-binding protein alpha-9 subunit (gpaI) of Dictyostelium discoideum (Social amoeba).